Here is an 80-residue protein sequence, read N- to C-terminus: Small, acid-soluble spore protein Tlp (80 aa).

This sequence belongs to the Tlp family.

The protein localises to the spore core. The protein is Small, acid-soluble spore protein Tlp of Bacillus pumilus (strain SAFR-032).